Here is a 91-residue protein sequence, read N- to C-terminus: MASISIRCPSCSATEGVVRNGKSTAGHQRYLCSPCRKTWQLQFTYTASQPGKHQKIIDMAMNGVGCRASARIMGVGLNTVLRHLKNSGRSR.

The protein belongs to the IS1 elements InsA family.

Absolutely required for transposition of IS1. The polypeptide is Insertion element IS1 7 protein InsA (insA7) (Escherichia coli (strain K12)).